The primary structure comprises 184 residues: Photosystem I assembly protein Ycf4 (184 aa).

2 consecutive transmembrane segments (helical) span residues 19–39 and 57–77; these read ISNF…VLVG and ILFF…LFIS.

Belongs to the Ycf4 family.

The protein resides in the plastid. It localises to the chloroplast thylakoid membrane. Seems to be required for the assembly of the photosystem I complex. The chain is Photosystem I assembly protein Ycf4 from Eucalyptus globulus subsp. globulus (Tasmanian blue gum).